Consider the following 355-residue polypeptide: Probable dual-specificity RNA methyltransferase RlmN (355 aa).

The segment at 1-20 (MSATPVTQLTPSSQPQQPCS) is disordered. The active-site Proton acceptor is the Glu-107. Residues 113-341 (TDKRLTVCVS…VSVRYSRGLE (229 aa)) form the Radical SAM core domain. The cysteines at positions 120 and 346 are disulfide-linked. [4Fe-4S] cluster-binding residues include Cys-127, Cys-131, and Cys-134. S-adenosyl-L-methionine contacts are provided by residues 174 to 175 (GE), Ser-204, 227 to 229 (SLH), and Asn-303. Catalysis depends on Cys-346, which acts as the S-methylcysteine intermediate.

Belongs to the radical SAM superfamily. RlmN family. Requires [4Fe-4S] cluster as cofactor.

Its subcellular location is the cytoplasm. The catalysed reaction is adenosine(2503) in 23S rRNA + 2 reduced [2Fe-2S]-[ferredoxin] + 2 S-adenosyl-L-methionine = 2-methyladenosine(2503) in 23S rRNA + 5'-deoxyadenosine + L-methionine + 2 oxidized [2Fe-2S]-[ferredoxin] + S-adenosyl-L-homocysteine. The enzyme catalyses adenosine(37) in tRNA + 2 reduced [2Fe-2S]-[ferredoxin] + 2 S-adenosyl-L-methionine = 2-methyladenosine(37) in tRNA + 5'-deoxyadenosine + L-methionine + 2 oxidized [2Fe-2S]-[ferredoxin] + S-adenosyl-L-homocysteine. Specifically methylates position 2 of adenine 2503 in 23S rRNA and position 2 of adenine 37 in tRNAs. This Nostoc sp. (strain PCC 7120 / SAG 25.82 / UTEX 2576) protein is Probable dual-specificity RNA methyltransferase RlmN.